The following is a 558-amino-acid chain: Armadillo repeat-containing X-linked protein 5 (558 aa).

2 stretches are compositionally biased toward basic and acidic residues: residues 1-14 (MVDS…RGKA) and 139-156 (KSHD…REET). Disordered regions lie at residues 1-35 (MVDS…GKTQ) and 139-165 (KSHD…SSDE). One copy of the ARM 1 repeat lies at 300–339 (CKSRGFSLEPKEFDKLVALLKLTKDPFIHEIATMIMGISP). A disordered region spans residues 369 to 388 (HPGALSMVDDSSESSEEPKS). ARM repeat units follow at residues 422 to 461 (IKFE…CLSK), 463 to 503 (HANT…NINF), and 520 to 558 (SELI…ILKL).

Belongs to the eutherian X-chromosome-specific Armcx family.

The chain is Armadillo repeat-containing X-linked protein 5 (ARMCX5) from Homo sapiens (Human).